Reading from the N-terminus, the 89-residue chain is Small ribosomal subunit protein bS18 (89 aa).

This sequence belongs to the bacterial ribosomal protein bS18 family. Part of the 30S ribosomal subunit. Forms a tight heterodimer with protein bS6.

Binds as a heterodimer with protein bS6 to the central domain of the 16S rRNA, where it helps stabilize the platform of the 30S subunit. The protein is Small ribosomal subunit protein bS18 of Bdellovibrio bacteriovorus (strain ATCC 15356 / DSM 50701 / NCIMB 9529 / HD100).